A 312-amino-acid chain; its full sequence is MPPRLPLAQAARCCQASLTARPSVPASSPTSSLISLFAALSVQTRSASILASLSDNRGAYHKRIRKGRGPSSGYGKTAGRGTKGQKAHGHVKPWFQGGQTPLIVSHGRKGFVNQFAADMSELNLEKLQEWIEAGRIDPTKPITPKEIIKSGIIGSSIKDGIKLLGRGKESFKIPVTITVSRASASAIEAIEAAGGKIVTRFYTKESLKRLVEGKSLHTDKPLPVGKEHVEEILAQARSLKKKYYRLPDPTSRWDIEYYRDPAHRGYLSHQLAPGESPSLYFKVPTGGEKVKVVRADKVKASKTGDVASEKLF.

A disordered region spans residues 63–89; that stretch reads RIRKGRGPSSGYGKTAGRGTKGQKAHG. A compositionally biased stretch (gly residues) spans 70–82; that stretch reads PSSGYGKTAGRGT.

This sequence belongs to the universal ribosomal protein uL15 family. Component of the mitochondrial large ribosomal subunit (mt-LSU). Mature N.crassa 74S mitochondrial ribosomes consist of a small (37S) and a large (54S) subunit. The 37S small subunit contains a 16S ribosomal RNA (16S mt-rRNA) and 32 different proteins. The 54S large subunit contains a 23S rRNA (23S mt-rRNA) and 42 different proteins.

Its subcellular location is the mitochondrion. Component of the mitochondrial ribosome (mitoribosome), a dedicated translation machinery responsible for the synthesis of mitochondrial genome-encoded proteins, including at least some of the essential transmembrane subunits of the mitochondrial respiratory chain. The mitoribosomes are attached to the mitochondrial inner membrane and translation products are cotranslationally integrated into the membrane. In Neurospora crassa (strain ATCC 24698 / 74-OR23-1A / CBS 708.71 / DSM 1257 / FGSC 987), this protein is Large ribosomal subunit protein uL15m (mrpl10).